Here is a 484-residue protein sequence, read N- to C-terminus: Aspartyl/glutamyl-tRNA(Asn/Gln) amidotransferase subunit B (484 aa).

Belongs to the GatB/GatE family. GatB subfamily. As to quaternary structure, heterotrimer of A, B and C subunits.

It catalyses the reaction L-glutamyl-tRNA(Gln) + L-glutamine + ATP + H2O = L-glutaminyl-tRNA(Gln) + L-glutamate + ADP + phosphate + H(+). The enzyme catalyses L-aspartyl-tRNA(Asn) + L-glutamine + ATP + H2O = L-asparaginyl-tRNA(Asn) + L-glutamate + ADP + phosphate + 2 H(+). Its function is as follows. Allows the formation of correctly charged Asn-tRNA(Asn) or Gln-tRNA(Gln) through the transamidation of misacylated Asp-tRNA(Asn) or Glu-tRNA(Gln) in organisms which lack either or both of asparaginyl-tRNA or glutaminyl-tRNA synthetases. The reaction takes place in the presence of glutamine and ATP through an activated phospho-Asp-tRNA(Asn) or phospho-Glu-tRNA(Gln). This is Aspartyl/glutamyl-tRNA(Asn/Gln) amidotransferase subunit B from Anaeromyxobacter sp. (strain K).